We begin with the raw amino-acid sequence, 358 residues long: Protein phosphatase 1 regulatory subunit 3G (358 aa).

Positions 1 to 71 are disordered; that stretch reads MEPIGARLSL…KEEAAPQEQE (71 aa). The segment covering 11–29 has biased composition (low complexity); that stretch reads EAPGPAPFREAPPAEELPA. A Phosphoserine modification is found at S86. Residues 210 to 350 enclose the CBM21 domain; that stretch reads AERLQRQRVC…NNAGANYTLR (141 aa). Positions 270–280 are enriched in low complexity; sequence EPLEPQQPEAP. The disordered stretch occupies residues 270 to 295; sequence EPLEPQQPEAPSGASEPGSGDAKKEP.

Its function is as follows. Glycogen-targeting subunit for protein phosphatase 1 (PP1). Involved in the regulation of hepatic glycogenesis in a manner coupled to the fasting-feeding cycle and distinct from other glycogen-targeting subunits. This Homo sapiens (Human) protein is Protein phosphatase 1 regulatory subunit 3G (PPP1R3G).